We begin with the raw amino-acid sequence, 182 residues long: Large ribosomal subunit protein bL25 (182 aa).

Belongs to the bacterial ribosomal protein bL25 family. CTC subfamily. Part of the 50S ribosomal subunit; part of the 5S rRNA/L5/L18/L25 subcomplex. Contacts the 5S rRNA. Binds to the 5S rRNA independently of L5 and L18.

Its function is as follows. This is one of the proteins that binds to the 5S RNA in the ribosome where it forms part of the central protuberance. This chain is Large ribosomal subunit protein bL25, found in Borreliella burgdorferi (strain ZS7) (Borrelia burgdorferi).